The primary structure comprises 430 residues: Gamma-glutamyl phosphate reductase (430 aa).

The protein belongs to the gamma-glutamyl phosphate reductase family.

Its subcellular location is the cytoplasm. The catalysed reaction is L-glutamate 5-semialdehyde + phosphate + NADP(+) = L-glutamyl 5-phosphate + NADPH + H(+). Its pathway is amino-acid biosynthesis; L-proline biosynthesis; L-glutamate 5-semialdehyde from L-glutamate: step 2/2. Its function is as follows. Catalyzes the NADPH-dependent reduction of L-glutamate 5-phosphate into L-glutamate 5-semialdehyde and phosphate. The product spontaneously undergoes cyclization to form 1-pyrroline-5-carboxylate. The sequence is that of Gamma-glutamyl phosphate reductase from Rhodopseudomonas palustris (strain BisA53).